Here is a 158-residue protein sequence, read N- to C-terminus: Transcription elongation factor GreA (158 aa).

This sequence belongs to the GreA/GreB family.

In terms of biological role, necessary for efficient RNA polymerase transcription elongation past template-encoded arresting sites. The arresting sites in DNA have the property of trapping a certain fraction of elongating RNA polymerases that pass through, resulting in locked ternary complexes. Cleavage of the nascent transcript by cleavage factors such as GreA or GreB allows the resumption of elongation from the new 3'terminus. GreA releases sequences of 2 to 3 nucleotides. The polypeptide is Transcription elongation factor GreA (Bacillus licheniformis (strain ATCC 14580 / DSM 13 / JCM 2505 / CCUG 7422 / NBRC 12200 / NCIMB 9375 / NCTC 10341 / NRRL NRS-1264 / Gibson 46)).